The following is a 211-amino-acid chain: Beta-crystallin B3 (211 aa).

Met-1 is modified (N-acetylmethionine). Ala-2 carries the post-translational modification N-acetylalanine; in Beta-crystallin B3, N-terminally processed. Residues 2 to 23 form an N-terminal arm region; that stretch reads AEQHGAPEQAAAGKSHGDLGGS. Beta/gamma crystallin 'Greek key' domains follow at residues 24-63 and 64-108; these read YKVI…QVES and GPWL…RPLN. Residues 109 to 113 are connecting peptide; sequence IDSPH. Beta/gamma crystallin 'Greek key' domains are found at residues 114–155 and 156–198; these read HKLH…RAIN and GTWV…RRIR. The C-terminal arm stretch occupies residues 200 to 211; that stretch reads QKWHKRGRFPSS.

The protein belongs to the beta/gamma-crystallin family. As to quaternary structure, homo/heterodimer, or complexes of higher-order. The structure of beta-crystallin oligomers seems to be stabilized through interactions between the N-terminal arms.

Functionally, crystallins are the dominant structural components of the vertebrate eye lens. The polypeptide is Beta-crystallin B3 (CRYBB3) (Homo sapiens (Human)).